Reading from the N-terminus, the 759-residue chain is Inhibitor of nuclear factor kappa-B kinase subunit alpha (759 aa).

Residues 1–20 (MERGAERGPPPAPGGVALRG) form a disordered region. Residues 29–316 (WEMRDRLGTG…PETNSPKCFL (288 aa)) enclose the Protein kinase domain. ATP-binding positions include 35-43 (LGTGGFGNV) and Lys58. The Proton acceptor role is filled by Asp158. The interval 469-490 (LLRYNANLIKMKNNMVSASQQL) is leucine-zipper. The span at 691 to 703 (TPAATWVPQSSSE) shows a compositional bias: polar residues. The tract at residues 691 to 715 (TPAATWVPQSSSEYAPHPLSSMATP) is disordered. Residues 753–758 (FDWSWL) are NEMO-binding.

Belongs to the protein kinase superfamily. Ser/Thr protein kinase family. I-kappa-B kinase subfamily.

The protein resides in the cytoplasm. It is found in the nucleus. It catalyses the reaction L-seryl-[I-kappa-B protein] + ATP = O-phospho-L-seryl-[I-kappa-B protein] + ADP + H(+). With respect to regulation, activated when phosphorylated and inactivated when dephosphorylated. In terms of biological role, phosphorylates inhibitors of NF-kappa-B thus leading to the dissociation of the inhibitor/NF-kappa-B complex and ultimately the degradation of the inhibitor. Phosphorylates 'Ser-10' of histone H3 at NF-kappa-B-regulated promoters during inflammatory responses triggered by cytokines. The sequence is that of Inhibitor of nuclear factor kappa-B kinase subunit alpha (CHUK) from Gallus gallus (Chicken).